The following is a 302-amino-acid chain: Citrate lyase subunit beta (302 aa).

Substrate-binding residues include R69 and E132. Mg(2+) is bound by residues E132 and D159.

The protein belongs to the HpcH/HpaI aldolase family. Citrate lyase beta subunit subfamily. As to quaternary structure, oligomer with a subunit composition of (alpha,beta,gamma)6. Requires Mg(2+) as cofactor.

The protein resides in the cytoplasm. It catalyses the reaction citrate = oxaloacetate + acetate. The enzyme catalyses (3S)-citryl-CoA = oxaloacetate + acetyl-CoA. Represents a citryl-ACP lyase. This is Citrate lyase subunit beta (citE) from Leuconostoc mesenteroides subsp. cremoris.